Here is a 793-residue protein sequence, read N- to C-terminus: uncharacterized protein (793 aa).

An N-terminal signal peptide occupies residues 1-21 (MLKKTLLAYTIGFAFSPPANA). An intrachain disulfide couples Cys-769 to Cys-792.

It belongs to the fimbrial export usher family.

The protein localises to the cell outer membrane. Functionally, involved in the export and assembly of a fimbrial subunit across the outer membrane. This is an uncharacterized protein from Escherichia coli (strain K12).